We begin with the raw amino-acid sequence, 2449 residues long: Nonribisomal peptide synthetase phqB (2449 aa).

The tract at residues 253-654 is adenylation 1; that stretch reads IQVHSGPGRL…GRRDTVVKIR (402 aa). Residues 795–870 form the Carrier 1 domain; that stretch reads LPMTPNEDVL…LRTVAKEARP (76 aa). Position 815 is an O-(pantetheine 4'-phosphoryl)serine (Ser-815). Residues 913–1337 are condensation 1; sequence QDIYPTTPLQ…LISDRDSELL (425 aa). Residues 1357–1756 form an adenylation 2 region; the sequence is EAQVTRNPSK…TFTFLGRTNQ (400 aa). A Carrier 2 domain is found at 1915-1993; that stretch reads WALSKHIGQL…MVAEMIDRTP (79 aa). At Ser-1952 the chain carries O-(pantetheine 4'-phosphoryl)serine. The segment at 2041–2297 is reductase (R) domain; the sequence is LTGATGFLGT…VAAVDWVASL (257 aa). Positions 2045, 2249, and 2259 each coordinate NADPH.

The protein belongs to the NRP synthetase family.

It functions in the pathway alkaloid biosynthesis. Nonribisomal peptide synthetase; part of the gene cluster that mediates the biosynthesis of paraherquamide, a fungal indole alkaloid that belongs to a family of natural products containing a characteristic bicyclo[2.2.2]diazaoctane core. The first steps in the biosynthesis of paraherquamide is the production of the beta-methyl-proline precursor from L-isoleucine. They require oxidation of a terminally hydroxylated L-isoleucine to the corresponding aldehyde by enzymes which have still to be identified. Spontaneous cyclization and dehydration would yield the 4-methyl pyrolline-5-carboxylic acid, which is then reduced by the pyrroline-5-carboxylate reductase phqD leading to the beta-methyl-proline precursor. The next step of paraherquamide biosynthesis involves coupling of beta-methyl-proline and L-tryptophan by the bimodular NRPS phqB, to produce a monooxopiperazine intermediate. The reductase (R) domain of phqB utilizes NADPH for hydride transfer to reduce the thioester bond of the T domain-tethered linear dipeptide to a hemithioaminal intermediate, which spontaneously cleaves the C-S bond to release the aldehyde product. This compound undergoes spontaneous cyclization and dehydration to give a dienamine which is reverse prenylated at C-2 by the reverse prenyltransferase phqJ. The other prenyltransferase present in the cluster, phqI may be a redundant gene in the pathway. During biosynthetic assembly, the key step to produce the polycyclic core is catalyzed by the bifunctional reductase and intramolecular [4+2] Diels-Alderase, phqE, resulting in formation of the [2.2.2] diazaoctane intermediate preparaherquamide. Following formation of preparaherquamide, an indole 2,3-epoxidation-initiated pinacol-like rearrangement is catalyzed by the phqK FAD-dependent monooxygenase. The prenyltransferase phqA, the cytochrome P450 monooxygenase phqL, and the FAD-linked oxidoreductase phqH (or the cytochrome P450 monooxygenase phqM), are proposed to be involved in the formation of the pyran ring. The FAD-dependent monooxygenase phqK is likely responsible for generation of the spiro-oxindole, and the N-methylation is likely mediated by the phqN methyltransferase leading to the isolable natural product paraherquamide F. However, the order of these biosynthetic steps has still to be determined. In late-stage paraherquamide biosynthesis, the third P450 monooxygenase, phqO, is probably responsible for the C-14 hydroxylation, transforming paraherquamide F to paraherquamide G, and paraherquamide E to the final product paraherquamide A. The expansion from the 6-membered ring pyran (in paraherquamides F and G) to the 7-membered dioxepin ring (in paraherquamides A and E) represents a poorly understood but intriguing process that probably involves the 2-oxoglutarate-dependent dioxygenase phqC. Finally, the remaining members of the paraherquamide cluster, including phqI as well as phqM (or phqH), do not have a clearly prescribed role and appear to be redundant. This is Nonribisomal peptide synthetase phqB from Penicillium fellutanum.